Here is a 468-residue protein sequence, read N- to C-terminus: Na(+)/H(+) antiporter NhaA (468 aa).

10 helical membrane passes run 32–52 (FLHI…IALL), 83–103 (LHFW…GMEI), 119–139 (ALPM…YLAI), 148–168 (GWAV…ALLG), 178–198 (FLLA…AVAF), 205–225 (GGFL…WIGV), 320–340 (ALHP…NAGV), 354–374 (GAMF…IVSV), 397–417 (LVGL…TLAF), and 428–448 (LGVL…GFIY).

The protein belongs to the NhaA Na(+)/H(+) (TC 2.A.33) antiporter family.

It is found in the cell inner membrane. It carries out the reaction Na(+)(in) + 2 H(+)(out) = Na(+)(out) + 2 H(+)(in). Its function is as follows. Na(+)/H(+) antiporter that extrudes sodium in exchange for external protons. In Cupriavidus necator (strain ATCC 17699 / DSM 428 / KCTC 22496 / NCIMB 10442 / H16 / Stanier 337) (Ralstonia eutropha), this protein is Na(+)/H(+) antiporter NhaA.